The primary structure comprises 697 residues: Potassium-transporting ATPase ATP-binding subunit (697 aa).

The next 4 membrane-spanning stretches (helical) occupy residues Pro-55–Ser-75, Ser-79–Ala-99, Leu-245–Phe-265, and Val-271–Ile-291. Asp-324 acts as the 4-aspartylphosphate intermediate in catalysis. Residues Asp-361, Glu-365, Phe-393–Ser-400, and Lys-412 each bind ATP. Mg(2+) is bound by residues Asp-535 and Asp-539. The next 3 helical transmembrane spans lie at Phe-605–Met-625, Ala-633–Met-653, and Gly-677–Ile-697.

This sequence belongs to the cation transport ATPase (P-type) (TC 3.A.3) family. Type IA subfamily. In terms of assembly, the system is composed of three essential subunits: KdpA, KdpB and KdpC.

It localises to the cell membrane. It catalyses the reaction K(+)(out) + ATP + H2O = K(+)(in) + ADP + phosphate + H(+). In terms of biological role, part of the high-affinity ATP-driven potassium transport (or Kdp) system, which catalyzes the hydrolysis of ATP coupled with the electrogenic transport of potassium into the cytoplasm. This subunit is responsible for energy coupling to the transport system and for the release of the potassium ions to the cytoplasm. The sequence is that of Potassium-transporting ATPase ATP-binding subunit from Bacillus anthracis (strain CDC 684 / NRRL 3495).